The chain runs to 367 residues: MSKPISQIEPLPHIAATKPYVPGGKLHGAKGAVAMLASNENPFGPSPKAVEAAKAAAANVHVYPDPDYGPLRAAIAAAKGIADASRVVTSAGSDEIIHLLTQCYAGPGDEVLFTEHAFSMYRVSAGAHGATSVTVPETDMTAGVNAILGAVSPRTKILFLANPNNPTGTMLSVDELKALQDALPPHVLFVVDGAYSEYLGPDYEAQLRDLVDRRDNTVMMRTFSKIYGLAAMRLGWAYMPAGIAAIYQRIRGPFNVSSIAAAAGIACVGDEAFLKMSRDHNTHWRAIMTDALNAMGLPTPPSHANFIVTEFGSDERAAAANQHLKDNDILVRAIGGYGLPTKLRISVGSADDNQRFLDALKAFTASR.

Lys225 carries the N6-(pyridoxal phosphate)lysine modification.

Belongs to the class-II pyridoxal-phosphate-dependent aminotransferase family. Histidinol-phosphate aminotransferase subfamily. In terms of assembly, homodimer. The cofactor is pyridoxal 5'-phosphate.

It catalyses the reaction L-histidinol phosphate + 2-oxoglutarate = 3-(imidazol-4-yl)-2-oxopropyl phosphate + L-glutamate. The protein operates within amino-acid biosynthesis; L-histidine biosynthesis; L-histidine from 5-phospho-alpha-D-ribose 1-diphosphate: step 7/9. The chain is Histidinol-phosphate aminotransferase from Hyphomonas neptunium (strain ATCC 15444).